Consider the following 174-residue polypeptide: Calcineurin subunit B (174 aa).

EF-hand domains follow at residues 21-56 (EEIE…ASNP), 60-88 (RLFS…FSVH), 90-125 (NKEE…MVGT), and 131-166 (QLQQ…SNVT). Positions 34, 36, 38, 40, 45, 66, 68, 72, 77, 103, 105, 107, 109, 114, 144, 146, 148, 150, and 155 each coordinate Ca(2+).

The protein belongs to the calcineurin regulatory subunit family. As to quaternary structure, composed of a catalytic subunit (A) and a regulatory subunit (B).

Its function is as follows. Regulatory subunit of calcineurin, a calcium-dependent, calmodulin stimulated protein phosphatase. Confers calcium sensitivity. The protein is Calcineurin subunit B (cnb1) of Schizosaccharomyces pombe (strain 972 / ATCC 24843) (Fission yeast).